Consider the following 238-residue polypeptide: Pyridoxine 5'-phosphate synthase (238 aa).

N7 provides a ligand contact to 3-amino-2-oxopropyl phosphate. 9-10 (DH) is a 1-deoxy-D-xylulose 5-phosphate binding site. R18 is a 3-amino-2-oxopropyl phosphate binding site. H43 functions as the Proton acceptor in the catalytic mechanism. 1-deoxy-D-xylulose 5-phosphate contacts are provided by R45 and H50. E70 serves as the catalytic Proton acceptor. T100 provides a ligand contact to 1-deoxy-D-xylulose 5-phosphate. H190 (proton donor) is an active-site residue. 3-amino-2-oxopropyl phosphate-binding positions include G191 and 212-213 (GH).

Belongs to the PNP synthase family. In terms of assembly, homooctamer; tetramer of dimers.

The protein resides in the cytoplasm. The catalysed reaction is 3-amino-2-oxopropyl phosphate + 1-deoxy-D-xylulose 5-phosphate = pyridoxine 5'-phosphate + phosphate + 2 H2O + H(+). It functions in the pathway cofactor biosynthesis; pyridoxine 5'-phosphate biosynthesis; pyridoxine 5'-phosphate from D-erythrose 4-phosphate: step 5/5. Functionally, catalyzes the complicated ring closure reaction between the two acyclic compounds 1-deoxy-D-xylulose-5-phosphate (DXP) and 3-amino-2-oxopropyl phosphate (1-amino-acetone-3-phosphate or AAP) to form pyridoxine 5'-phosphate (PNP) and inorganic phosphate. This is Pyridoxine 5'-phosphate synthase from Prochlorococcus marinus (strain MIT 9215).